The primary structure comprises 292 residues: Acetyl-coenzyme A carboxylase carboxyl transferase subunit beta (292 aa).

One can recognise a CoA carboxyltransferase N-terminal domain in the interval L29–N292. 4 residues coordinate Zn(2+): C33, C36, C52, and C55. A C4-type zinc finger spans residues C33 to C55.

Belongs to the AccD/PCCB family. Acetyl-CoA carboxylase is a heterohexamer composed of biotin carboxyl carrier protein (AccB), biotin carboxylase (AccC) and two subunits each of ACCase subunit alpha (AccA) and ACCase subunit beta (AccD). It depends on Zn(2+) as a cofactor.

It localises to the cytoplasm. The catalysed reaction is N(6)-carboxybiotinyl-L-lysyl-[protein] + acetyl-CoA = N(6)-biotinyl-L-lysyl-[protein] + malonyl-CoA. Its pathway is lipid metabolism; malonyl-CoA biosynthesis; malonyl-CoA from acetyl-CoA: step 1/1. Its function is as follows. Component of the acetyl coenzyme A carboxylase (ACC) complex. Biotin carboxylase (BC) catalyzes the carboxylation of biotin on its carrier protein (BCCP) and then the CO(2) group is transferred by the transcarboxylase to acetyl-CoA to form malonyl-CoA. The polypeptide is Acetyl-coenzyme A carboxylase carboxyl transferase subunit beta (Prochlorococcus marinus subsp. pastoris (strain CCMP1986 / NIES-2087 / MED4)).